A 274-amino-acid polypeptide reads, in one-letter code: Glutamate racemase (274 aa).

Substrate contacts are provided by residues 9–10 (DS) and 41–42 (YG). Cysteine 73 serves as the catalytic Proton donor/acceptor. 74 to 75 (NT) contacts substrate. Residue cysteine 183 is the Proton donor/acceptor of the active site. 184–185 (TH) provides a ligand contact to substrate.

This sequence belongs to the aspartate/glutamate racemases family.

The catalysed reaction is L-glutamate = D-glutamate. It functions in the pathway cell wall biogenesis; peptidoglycan biosynthesis. Functionally, provides the (R)-glutamate required for cell wall biosynthesis. This is Glutamate racemase from Shewanella baltica (strain OS223).